A 167-amino-acid polypeptide reads, in one-letter code: SAR-endolysin (167 aa).

A helical; Signal-anchor for type II membrane protein membrane pass occupies residues 11–31; it reads VIAAISGGAIAIASVLITGPG. Residues E37 and D46 each act as proton donor/acceptor in the active site.

It belongs to the glycosyl hydrolase 24 family.

It localises to the host cell inner membrane. It catalyses the reaction Hydrolysis of (1-&gt;4)-beta-linkages between N-acetylmuramic acid and N-acetyl-D-glucosamine residues in a peptidoglycan and between N-acetyl-D-glucosamine residues in chitodextrins.. Signal-arrest-release (SAR) endolysin with lysozyme activity that degrades host peptidoglycans and participates with the pinholin and spanin proteins in the sequential events which lead to programmed host cell lysis releasing the mature viral particles. Once the pinholin has permeabilized the host cell membrane, the SAR-endolysin is released into the periplasm where it breaks down the peptidoglycan layer. This is SAR-endolysin (19) from Bacteriophage PS34.